Consider the following 488-residue polypeptide: Histamine H1 receptor (488 aa).

The Extracellular portion of the chain corresponds to M1–P29. 2 N-linked (GlcNAc...) asparagine glycosylation sites follow: N5 and N18. Residues L30–Y50 form a helical membrane-spanning segment. The Cytoplasmic segment spans residues A51–L64. The chain crosses the membrane as a helical span at residues Y65–I89. The Extracellular segment spans residues M90 to R97. The chain crosses the membrane as a helical span at residues P98 to I123. C100 and C180 are disulfide-bonded. Histamine contacts are provided by D107 and T112. An important for agonist binding region spans residues D107 to T112. The Cytoplasmic segment spans residues D124–A144. 2 positions are modified to phosphothreonine: T140 and T142. The helical transmembrane segment at S145–G164 threads the bilayer. Residues W165–T188 lie on the Extracellular side of the membrane. Residues W189–V211 traverse the membrane as a helical segment. N198 provides a ligand contact to histamine. Residues K212–Q417 are Cytoplasmic-facing. S230 bears the Phosphoserine mark. Residues K245 to L337 form a disordered region. Positions A322–L337 are enriched in polar residues. Residues S344, S347, S381, S383, S397, and S399 each carry the phosphoserine modification. The helical transmembrane segment at L418–F441 threads the bilayer. Residues F425 to W429 are important for agonist binding. Residue Y432 participates in histamine binding. C442 and C445 are joined by a disulfide. Over C442–S447 the chain is Extracellular. Residues E448–P470 traverse the membrane as a helical segment. Residues L471–S488 are Cytoplasmic-facing.

It belongs to the G-protein coupled receptor 1 family. In terms of processing, phosphorylation at sites in the second and third cytoplasmic loops independently contribute to agonist-induced receptor down-regulation.

The protein localises to the cell membrane. Its function is as follows. G-protein-coupled receptor for histamine, a biogenic amine that functions as an immune modulator and a neurotransmitter. Through the H1 receptor, histamine mediates the contraction of smooth muscles and increases capillary permeability due to contraction of terminal venules. Also mediates neurotransmission in the central nervous system and thereby regulates circadian rhythms, emotional and locomotor activities as well as cognitive functions. This Mus musculus (Mouse) protein is Histamine H1 receptor.